The following is a 119-amino-acid chain: Large ribosomal subunit protein bL17 (119 aa).

Belongs to the bacterial ribosomal protein bL17 family. In terms of assembly, part of the 50S ribosomal subunit. Contacts protein L32.

The chain is Large ribosomal subunit protein bL17 from Malacoplasma penetrans (strain HF-2) (Mycoplasma penetrans).